The following is a 321-amino-acid chain: Lipoyl synthase (321 aa).

[4Fe-4S] cluster contacts are provided by cysteine 68, cysteine 73, cysteine 79, cysteine 94, cysteine 98, cysteine 101, and serine 308. The Radical SAM core domain maps to 80-297 (FNHGTATFMI…KDYAEEIGFT (218 aa)).

Belongs to the radical SAM superfamily. Lipoyl synthase family. It depends on [4Fe-4S] cluster as a cofactor.

The protein localises to the cytoplasm. The enzyme catalyses [[Fe-S] cluster scaffold protein carrying a second [4Fe-4S](2+) cluster] + N(6)-octanoyl-L-lysyl-[protein] + 2 oxidized [2Fe-2S]-[ferredoxin] + 2 S-adenosyl-L-methionine + 4 H(+) = [[Fe-S] cluster scaffold protein] + N(6)-[(R)-dihydrolipoyl]-L-lysyl-[protein] + 4 Fe(3+) + 2 hydrogen sulfide + 2 5'-deoxyadenosine + 2 L-methionine + 2 reduced [2Fe-2S]-[ferredoxin]. It functions in the pathway protein modification; protein lipoylation via endogenous pathway; protein N(6)-(lipoyl)lysine from octanoyl-[acyl-carrier-protein]: step 2/2. In terms of biological role, catalyzes the radical-mediated insertion of two sulfur atoms into the C-6 and C-8 positions of the octanoyl moiety bound to the lipoyl domains of lipoate-dependent enzymes, thereby converting the octanoylated domains into lipoylated derivatives. The chain is Lipoyl synthase from Shewanella loihica (strain ATCC BAA-1088 / PV-4).